We begin with the raw amino-acid sequence, 663 residues long: Rho GTPase-activating protein 18 (663 aa).

Disordered regions lie at residues 14–73 (AYHP…DESM) and 85–106 (RSNE…DEGE). Residues 27 to 37 (SHVKGGDEATS) show a composition bias toward basic and acidic residues. Polar residues predominate over residues 38–51 (SRRYGQYTINQEGS). Phosphoserine is present on residues S65 and S68. Basic and acidic residues predominate over residues 85-102 (RSNENRQEGQEAIVVKEP). T156 is modified (phosphothreonine). Disordered regions lie at residues 173 to 228 (FAQQ…PASE) and 245 to 277 (KEFS…TRIG). Composition is skewed to basic and acidic residues over residues 178–205 (EAQE…KDDQ) and 212–222 (DSKEQISRVPE). Phosphoserine occurs at positions 260 and 263. Residues 324–523 (IPLTILLEQD…LLIRYQKILW (200 aa)) enclose the Rho-GAP domain. The residue at position 610 (S610) is a Phosphoserine.

As to quaternary structure, interacts with MPHOSPH6. Widely expressed: expressed in most organs, except small intestine.

It localises to the cytoplasm. In terms of biological role, rho GTPase activating protein that suppresses F-actin polymerization by inhibiting Rho. Rho GTPase activating proteins act by converting Rho-type GTPases to an inactive GDP-bound state. Plays a key role in tissue tension and 3D tissue shape by regulating cortical actomyosin network formation. Acts downstream of YAP1 and inhibits actin polymerization, which in turn reduces nuclear localization of YAP1. Regulates cell shape, spreading, and migration. This Mus musculus (Mouse) protein is Rho GTPase-activating protein 18.